Consider the following 79-residue polypeptide: Conotoxin ArMSGL-0123 (79 aa).

An N-terminal signal peptide occupies residues 1 to 20 (MSRLGIMVLTLLLLVFIVTS). A propeptide spanning residues 21–44 (HQDAGEKQATKRAAVNFRWRRSFT) is cleaved from the precursor. 3 cysteine pairs are disulfide-bonded: Cys52/Cys64, Cys56/Cys73, and Cys63/Cys77. Leu78 bears the Leucine amide mark.

This sequence belongs to the conotoxin O3 superfamily. Expressed by the venom duct.

The protein localises to the secreted. The sequence is that of Conotoxin ArMSGL-0123 from Conus arenatus (Sand-dusted cone).